We begin with the raw amino-acid sequence, 193 residues long: Large ribosomal subunit protein bL17m (193 aa).

The protein belongs to the bacterial ribosomal protein bL17 family. As to quaternary structure, component of the mitochondrial large ribosomal subunit (mt-LSU). Mature N.crassa 74S mitochondrial ribosomes consist of a small (37S) and a large (54S) subunit. The 37S small subunit contains a 16S ribosomal RNA (16S mt-rRNA) and 32 different proteins. The 54S large subunit contains a 23S rRNA (23S mt-rRNA) and 42 different proteins.

It is found in the mitochondrion. Component of the mitochondrial ribosome (mitoribosome), a dedicated translation machinery responsible for the synthesis of mitochondrial genome-encoded proteins, including at least some of the essential transmembrane subunits of the mitochondrial respiratory chain. The mitoribosomes are attached to the mitochondrial inner membrane and translation products are cotranslationally integrated into the membrane. This is Large ribosomal subunit protein bL17m (mrpl8) from Neurospora crassa (strain ATCC 24698 / 74-OR23-1A / CBS 708.71 / DSM 1257 / FGSC 987).